A 661-amino-acid chain; its full sequence is PAN2-PAN3 deadenylation complex subunit PAN3 (661 aa).

2 disordered regions span residues Met-1 to Asn-26 and Asp-53 to Asp-130. The segment at Asn-26–His-55 adopts a C3H1-type zinc-finger fold. The segment covering Ser-75 to Ser-102 has biased composition (low complexity). Positions Ser-115–Asp-130 are enriched in polar residues. The tract at residues Gln-263 to Ser-524 is pseudokinase domain. ATP is bound by residues Arg-315, Asp-364–Thr-371, and Ser-424–Lys-425. The stretch at Ser-525–Phe-563 forms a coiled coil. A knob domain region spans residues Val-564–His-661.

The protein belongs to the protein kinase superfamily. PAN3 family. Homodimer. Forms a heterotrimer with a catalytic subunit pan2 to form the poly(A)-nuclease (PAN) deadenylation complex. Interacts (via PAM-2 motif) with poly(A)-binding protein pab1 (via PABC domain), conferring substrate specificity of the enzyme complex.

It is found in the cytoplasm. Functionally, regulatory subunit of the poly(A)-nuclease (PAN) deadenylation complex, one of two cytoplasmic mRNA deadenylases involved in mRNA turnover. PAN specifically shortens poly(A) tails of RNA and the activity is stimulated by poly(A)-binding protein pab1. PAN deadenylation is followed by rapid degradation of the shortened mRNA tails by the CCR4-NOT complex. Deadenylated mRNAs are then degraded by two alternative mechanisms, namely exosome-mediated 3'-5' exonucleolytic degradation, or deadenylation-dependent mRNA decaping and subsequent 5'-3' exonucleolytic degradation by xrn1. May also be involved in post-transcriptional maturation of mRNA poly(A) tails. pan3 acts as a positive regulator for PAN activity, recruiting the catalytic subunit pan2 to mRNA via its interaction with RNA and with pab1. The protein is PAN2-PAN3 deadenylation complex subunit PAN3 of Neosartorya fischeri (strain ATCC 1020 / DSM 3700 / CBS 544.65 / FGSC A1164 / JCM 1740 / NRRL 181 / WB 181) (Aspergillus fischerianus).